The chain runs to 433 residues: Serine hydroxymethyltransferase (433 aa).

Residues leucine 133 and 137 to 139 (GHL) contribute to the (6S)-5,6,7,8-tetrahydrofolate site. N6-(pyridoxal phosphate)lysine is present on lysine 242. Residue 366–368 (SPF) coordinates (6S)-5,6,7,8-tetrahydrofolate.

Belongs to the SHMT family. As to quaternary structure, homodimer. It depends on pyridoxal 5'-phosphate as a cofactor.

The protein resides in the cytoplasm. The enzyme catalyses (6R)-5,10-methylene-5,6,7,8-tetrahydrofolate + glycine + H2O = (6S)-5,6,7,8-tetrahydrofolate + L-serine. The protein operates within one-carbon metabolism; tetrahydrofolate interconversion. It participates in amino-acid biosynthesis; glycine biosynthesis; glycine from L-serine: step 1/1. Catalyzes the reversible interconversion of serine and glycine with tetrahydrofolate (THF) serving as the one-carbon carrier. This reaction serves as the major source of one-carbon groups required for the biosynthesis of purines, thymidylate, methionine, and other important biomolecules. Also exhibits THF-independent aldolase activity toward beta-hydroxyamino acids, producing glycine and aldehydes, via a retro-aldol mechanism. The protein is Serine hydroxymethyltransferase of Beijerinckia indica subsp. indica (strain ATCC 9039 / DSM 1715 / NCIMB 8712).